A 258-amino-acid chain; its full sequence is UPF0246 protein YaaA (258 aa).

The protein belongs to the UPF0246 family.

The chain is UPF0246 protein YaaA from Escherichia coli O8 (strain IAI1).